The sequence spans 203 residues: Pyridoxal 5'-phosphate synthase subunit PdxT (203 aa).

52-54 (GES) lines the L-glutamine pocket. The active-site Nucleophile is Cys84. L-glutamine-binding positions include Arg116 and 144-145 (IR). Catalysis depends on charge relay system residues His184 and Glu186.

It belongs to the glutaminase PdxT/SNO family. As to quaternary structure, in the presence of PdxS, forms a dodecamer of heterodimers. Only shows activity in the heterodimer.

It catalyses the reaction aldehydo-D-ribose 5-phosphate + D-glyceraldehyde 3-phosphate + L-glutamine = pyridoxal 5'-phosphate + L-glutamate + phosphate + 3 H2O + H(+). It carries out the reaction L-glutamine + H2O = L-glutamate + NH4(+). It functions in the pathway cofactor biosynthesis; pyridoxal 5'-phosphate biosynthesis. Catalyzes the hydrolysis of glutamine to glutamate and ammonia as part of the biosynthesis of pyridoxal 5'-phosphate. The resulting ammonia molecule is channeled to the active site of PdxS. This is Pyridoxal 5'-phosphate synthase subunit PdxT from Aeropyrum pernix (strain ATCC 700893 / DSM 11879 / JCM 9820 / NBRC 100138 / K1).